A 208-amino-acid polypeptide reads, in one-letter code: ATP-dependent Clp protease proteolytic subunit 1 (208 aa).

Serine 108 functions as the Nucleophile in the catalytic mechanism. Histidine 133 is an active-site residue.

Belongs to the peptidase S14 family. As to quaternary structure, fourteen ClpP subunits assemble into 2 heptameric rings which stack back to back to give a disk-like structure with a central cavity, resembling the structure of eukaryotic proteasomes.

Its subcellular location is the cytoplasm. It catalyses the reaction Hydrolysis of proteins to small peptides in the presence of ATP and magnesium. alpha-casein is the usual test substrate. In the absence of ATP, only oligopeptides shorter than five residues are hydrolyzed (such as succinyl-Leu-Tyr-|-NHMec, and Leu-Tyr-Leu-|-Tyr-Trp, in which cleavage of the -Tyr-|-Leu- and -Tyr-|-Trp bonds also occurs).. In terms of biological role, cleaves peptides in various proteins in a process that requires ATP hydrolysis. Has a chymotrypsin-like activity. Plays a major role in the degradation of misfolded proteins. The chain is ATP-dependent Clp protease proteolytic subunit 1 from Corynebacterium glutamicum (strain ATCC 13032 / DSM 20300 / JCM 1318 / BCRC 11384 / CCUG 27702 / LMG 3730 / NBRC 12168 / NCIMB 10025 / NRRL B-2784 / 534).